Here is a 130-residue protein sequence, read N- to C-terminus: Small ribosomal subunit protein uS11 (130 aa).

This sequence belongs to the universal ribosomal protein uS11 family. As to quaternary structure, part of the 30S ribosomal subunit. Interacts with proteins S7 and S18. Binds to IF-3.

Its function is as follows. Located on the platform of the 30S subunit, it bridges several disparate RNA helices of the 16S rRNA. Forms part of the Shine-Dalgarno cleft in the 70S ribosome. The sequence is that of Small ribosomal subunit protein uS11 from Acidiphilium cryptum (strain JF-5).